An 87-amino-acid polypeptide reads, in one-letter code: uncharacterized protein (87 aa).

This sequence belongs to the YlmC/YmxH family.

This is an uncharacterized protein from Clostridium acetobutylicum (strain ATCC 824 / DSM 792 / JCM 1419 / IAM 19013 / LMG 5710 / NBRC 13948 / NRRL B-527 / VKM B-1787 / 2291 / W).